Reading from the N-terminus, the 70-residue chain is Basic phospholipase A2 2 (70 aa).

Residues cysteine 28 and cysteine 44 are joined by a disulfide bond. The active site involves histidine 47. Aspartate 48 lines the Ca(2+) pocket.

This sequence belongs to the phospholipase A2 family. Group II subfamily. D49 sub-subfamily. Ca(2+) serves as cofactor. As to expression, expressed by the venom gland.

The protein resides in the secreted. The catalysed reaction is a 1,2-diacyl-sn-glycero-3-phosphocholine + H2O = a 1-acyl-sn-glycero-3-phosphocholine + a fatty acid + H(+). Snake venom phospholipase A2 (PLA2) that exhibits strong myotoxicity. PLA2 catalyzes the calcium-dependent hydrolysis of the 2-acyl groups in 3-sn-phosphoglycerides. The chain is Basic phospholipase A2 2 from Trimeresurus stejnegeri (Chinese green tree viper).